The primary structure comprises 465 residues: Glutamate--tRNA ligase (465 aa).

Residues 10 to 20 (PSPTGQLHIGG) carry the 'HIGH' region motif. Residues Cys-99, Cys-101, Cys-126, and Glu-128 each coordinate Zn(2+). A 'KMSKS' region motif is present at residues 236–240 (KLSKR). Lys-239 contacts ATP.

It belongs to the class-I aminoacyl-tRNA synthetase family. Glutamate--tRNA ligase type 1 subfamily. As to quaternary structure, monomer. The cofactor is Zn(2+).

The protein localises to the cytoplasm. The enzyme catalyses tRNA(Glu) + L-glutamate + ATP = L-glutamyl-tRNA(Glu) + AMP + diphosphate. Functionally, catalyzes the attachment of glutamate to tRNA(Glu) in a two-step reaction: glutamate is first activated by ATP to form Glu-AMP and then transferred to the acceptor end of tRNA(Glu). This Lawsonia intracellularis (strain PHE/MN1-00) protein is Glutamate--tRNA ligase.